Reading from the N-terminus, the 804-residue chain is Phenylalanine--tRNA ligase beta subunit (804 aa).

Residues 39–155 (AEGLKKIVVG…ADVKPGEEVY (117 aa)) enclose the tRNA-binding domain. Residues 408–483 (RNPSVVKTTV…RIYGYDNLKS (76 aa)) form the B5 domain. Residues Asp-461, Asp-467, Glu-470, and Glu-471 each coordinate Mg(2+). Residues 711–804 (PKFPAIERDL…LKESLKIKVR (94 aa)) enclose the FDX-ACB domain.

Belongs to the phenylalanyl-tRNA synthetase beta subunit family. Type 1 subfamily. As to quaternary structure, tetramer of two alpha and two beta subunits. Requires Mg(2+) as cofactor.

The protein localises to the cytoplasm. It carries out the reaction tRNA(Phe) + L-phenylalanine + ATP = L-phenylalanyl-tRNA(Phe) + AMP + diphosphate + H(+). This chain is Phenylalanine--tRNA ligase beta subunit, found in Lactobacillus johnsonii (strain CNCM I-12250 / La1 / NCC 533).